The chain runs to 83 residues: Exodeoxyribonuclease 7 small subunit (83 aa).

The protein belongs to the XseB family. In terms of assembly, heterooligomer composed of large and small subunits.

It localises to the cytoplasm. The enzyme catalyses Exonucleolytic cleavage in either 5'- to 3'- or 3'- to 5'-direction to yield nucleoside 5'-phosphates.. Its function is as follows. Bidirectionally degrades single-stranded DNA into large acid-insoluble oligonucleotides, which are then degraded further into small acid-soluble oligonucleotides. This Rhizobium rhizogenes (strain K84 / ATCC BAA-868) (Agrobacterium radiobacter) protein is Exodeoxyribonuclease 7 small subunit.